Consider the following 560-residue polypeptide: SWI/SNF complex subunit SWI3A homolog (560 aa).

The segment covering 1–13 (MSPPVAGAASSGD) has biased composition (low complexity). The interval 1–22 (MSPPVAGAASSGDGPPGRPPRE) is disordered. One can recognise an SWIRM domain in the interval 24–127 (YTIPASSGWF…FSASPSRPEA (104 aa)). In terms of domain architecture, SANT spans 242–293 (HSSSAWTDAETLLLLEGVLKHGDDWDLIAQHVRTKNKSECIARLIQLPFGEH). The segment covering 311–330 (TTDGKVNKSTVKESSSQPTE) has biased composition (polar residues). Disordered regions lie at residues 311 to 352 (TTDG…EEHP) and 414 to 445 (QTRA…PDKK). Residues 331–342 (TVDDMQIDGNED) show a composition bias toward acidic residues. 2 stretches are compositionally biased toward basic and acidic residues: residues 343–352 (GADKSVEEHP) and 424–445 (RQSD…PDKK).

As to quaternary structure, interacts with LFR.

The protein localises to the nucleus. Functionally, component of a multiprotein complex equivalent of the SWI/SNF complex, an ATP-dependent chromatin-remodeling complex, which is required for the positive and negative regulation of gene expression of a large number of genes. It changes chromatin structure by altering DNA-histone contacts within a nucleosome, leading eventually to a change in nucleosome position, thus facilitating or repressing binding of gene-specific transcription factors. The chain is SWI/SNF complex subunit SWI3A homolog from Oryza sativa subsp. japonica (Rice).